The primary structure comprises 152 residues: Nucleoside diphosphate kinase B (152 aa).

The segment at methionine 1–lysine 66 is interaction with AKAP13. Lysine 12, phenylalanine 60, arginine 88, threonine 94, arginine 105, and asparagine 115 together coordinate ATP. Histidine 118 (pros-phosphohistidine intermediate) is an active-site residue.

The protein belongs to the NDK family. As to quaternary structure, hexamer of two different chains: An and B (A6, A5B, A4B2, A3B3, A2B4, AB5, B6). Interacts with CAPN8. Interacts with AKAP13. Interacts with ITGB1BP1 (via C-terminal domain region). Interacts with BCL2L10. Mg(2+) is required as a cofactor. In terms of tissue distribution, ubiquitously expressed.

The protein localises to the cytoplasm. It is found in the cell projection. It localises to the lamellipodium. The protein resides in the ruffle. Its subcellular location is the perinuclear region. The protein localises to the nucleus. It catalyses the reaction a 2'-deoxyribonucleoside 5'-diphosphate + ATP = a 2'-deoxyribonucleoside 5'-triphosphate + ADP. The catalysed reaction is a ribonucleoside 5'-diphosphate + ATP = a ribonucleoside 5'-triphosphate + ADP. It carries out the reaction ATP + protein L-histidine = ADP + protein N-phospho-L-histidine.. Its function is as follows. Major role in the synthesis of nucleoside triphosphates other than ATP. The ATP gamma phosphate is transferred to the NDP beta phosphate via a ping-pong mechanism, using a phosphorylated active-site intermediate. Negatively regulates Rho activity by interacting with AKAP13/LBC. Acts as a transcriptional activator of the MYC gene; binds DNA non-specifically. Binds to both single-stranded guanine- and cytosine-rich strands within the nuclease hypersensitive element (NHE) III(1) region of the MYC gene promoter. Does not bind to duplex NHE III(1). Has G-quadruplex (G4) DNA-binding activity, which is independent of its nucleotide-binding and kinase activity. Binds both folded and unfolded G4 with similar low nanomolar affinities. Stabilizes folded G4s regardless of whether they are prefolded or not. Exhibits histidine protein kinase activity. This is Nucleoside diphosphate kinase B (NME2) from Homo sapiens (Human).